A 106-amino-acid chain; its full sequence is uncharacterized protein (106 aa).

Transmembrane regions (helical) follow at residues 17–37 (AGLL…AVLV) and 55–75 (FSSS…FMIF).

Its subcellular location is the membrane. This is an uncharacterized protein from Saccharomyces cerevisiae (strain ATCC 204508 / S288c) (Baker's yeast).